The sequence spans 373 residues: Indole glucosinolate O-methyltransferase 2 (373 aa).

Residues G217, D240, D260, M261, and K274 each contribute to the S-adenosyl-L-homocysteine site. Residue H278 is the Proton acceptor of the active site.

Belongs to the class I-like SAM-binding methyltransferase superfamily. Cation-independent O-methyltransferase family.

It participates in secondary metabolite biosynthesis. Involved in indole glucosinolate biosynthesis. Catalyzes methoxylation reactions of the glucosinolate indole ring. Converts the hydroxy intermediates 4-hydroxy-indol-3-yl-methylglucosinolate (4OH-I3M) and 1-hydroxy-indol-3-yl-methylglucosinolate (1OH-I3M) to 4-methoxy-indol-3-yl-methylglucosinolate (4MO-I3M) and 1-methoxy-indol-3-yl-methylglucosinolate (1MO-I3M), respectively. In Arabidopsis thaliana (Mouse-ear cress), this protein is Indole glucosinolate O-methyltransferase 2.